We begin with the raw amino-acid sequence, 20 residues long: L-amino-acid oxidase L1 (20 aa).

This sequence belongs to the flavin monoamine oxidase family. FIG1 subfamily. In terms of assembly, monomer. This is in contrast with most of its orthologs, that are non-covalently linked homodimers. Requires FAD as cofactor. Post-translationally, N-glycosylated. As to expression, expressed by the venom gland.

The protein resides in the secreted. It carries out the reaction an L-alpha-amino acid + O2 + H2O = a 2-oxocarboxylate + H2O2 + NH4(+). It catalyses the reaction L-leucine + O2 + H2O = 4-methyl-2-oxopentanoate + H2O2 + NH4(+). The catalysed reaction is L-phenylalanine + O2 + H2O = 3-phenylpyruvate + H2O2 + NH4(+). The enzyme catalyses L-tryptophan + O2 + H2O = indole-3-pyruvate + H2O2 + NH4(+). It carries out the reaction L-methionine + O2 + H2O = 4-methylsulfanyl-2-oxobutanoate + H2O2 + NH4(+). It catalyses the reaction L-isoleucine + O2 + H2O = (S)-3-methyl-2-oxopentanoate + H2O2 + NH4(+). The catalysed reaction is L-tyrosine + O2 + H2O = 3-(4-hydroxyphenyl)pyruvate + H2O2 + NH4(+). In terms of biological role, catalyzes an oxidative deamination of predominantly hydrophobic and aromatic L-amino acids, thus producing hydrogen peroxide that may contribute to the diverse toxic effects of this enzyme. Is active on L-Met, L-Ile, L-Leu, L-Phe, L-Trp, and L-Tyr. Exhibits diverse biological activities, such as hemorrhage, hemolysis, edema, apoptosis of vascular endothelial cells or tumor cell lines, antibacterial and antiparasitic activities, as well as regulation of platelet aggregation. Its effect on platelets is controversial, since it either induces aggregation or inhibits agonist-induced aggregation. These different effects are probably due to different experimental conditions. The chain is L-amino-acid oxidase L1 from Daboia russelii (Russel's viper).